Here is an 83-residue protein sequence, read N- to C-terminus: Mu-theraphotoxin-Hhn2i (83 aa).

An N-terminal signal peptide occupies residues M1–A21. The propeptide occupies S22–R48. 3 disulfides stabilise this stretch: C50-C65, C57-C70, and C64-C77. Leucine amide is present on L81.

It belongs to the neurotoxin 10 (Hwtx-1) family. 15 (Hntx-3) subfamily. As to quaternary structure, monomer. As to expression, expressed by the venom gland.

It is found in the secreted. Lethal neurotoxin. Selectively blocks tetrodotoxin-sensitive voltage-gated sodium channels (Nav). Does not affect tetrodotoxin-resistant voltage-gated sodium channels or calcium channels. The protein is Mu-theraphotoxin-Hhn2i of Cyriopagopus hainanus (Chinese bird spider).